The chain runs to 357 residues: Selenide, water dikinase (357 aa).

C25 is a catalytic residue. Residues K28 and 57–59 (TAD) contribute to the ATP site. Position 60 (D60) interacts with Mg(2+). ATP is bound by residues D77, D100, and 148–150 (GHS). D100 lines the Mg(2+) pocket. D236 contacts Mg(2+).

The protein belongs to the selenophosphate synthase 1 family. Class I subfamily. As to quaternary structure, homodimer. Requires Mg(2+) as cofactor.

It carries out the reaction hydrogenselenide + ATP + H2O = selenophosphate + AMP + phosphate + 2 H(+). Functionally, synthesizes selenophosphate from selenide and ATP. The polypeptide is Selenide, water dikinase (Pseudomonas straminea).